The primary structure comprises 616 residues: Adenylosuccinate synthetase 2 (616 aa).

Positions 1 to 26 (MDKQAERDQSAGPVKTPQETQPPAHN) are disordered. A compositionally biased stretch (polar residues) spans 17 to 26 (PQETQPPAHN). Residues 87 to 93 (GDEGKGK) and 117 to 119 (GHT) contribute to the GTP site. Asp-88 acts as the Proton acceptor in catalysis. Positions 88 and 117 each coordinate Mg(2+). IMP contacts are provided by residues 88–91 (DEGK), 115–118 (NAGH), Thr-202, Lys-216, Gln-328, Thr-343, and Lys-472. The active-site Proton donor is the His-118. 468 to 474 (AVTKKPR) provides a ligand contact to substrate. GTP contacts are provided by residues Arg-474 and 603–605 (GNG).

Belongs to the adenylosuccinate synthetase family. In terms of assembly, homodimer. Mg(2+) serves as cofactor.

The protein localises to the cytoplasm. The enzyme catalyses IMP + L-aspartate + GTP = N(6)-(1,2-dicarboxyethyl)-AMP + GDP + phosphate + 2 H(+). The protein operates within purine metabolism; AMP biosynthesis via de novo pathway; AMP from IMP: step 1/2. Its function is as follows. Plays an important role in the salvage pathway for purine nucleotide biosynthesis. Catalyzes the first committed step in the biosynthesis of AMP from IMP. In Trypanosoma cruzi (strain CL Brener), this protein is Adenylosuccinate synthetase 2.